The primary structure comprises 398 residues: Elongation factor Tu (398 aa).

In terms of domain architecture, tr-type G spans 10 to 207; that stretch reads KPHVNIGTIG…TVDEYIPEPE (198 aa). Residues 19–26 form a G1 region; sequence GHVDHGKT. Residue 19 to 26 coordinates GTP; that stretch reads GHVDHGKT. Threonine 26 is a binding site for Mg(2+). The G2 stretch occupies residues 63–67; the sequence is GITIN. Positions 84-87 are G3; the sequence is DAPG. GTP contacts are provided by residues 84 to 88 and 139 to 142; these read DAPGH and NKVD. The segment at 139-142 is G4; the sequence is NKVD. The segment at 177-179 is G5; the sequence is SAL.

It belongs to the TRAFAC class translation factor GTPase superfamily. Classic translation factor GTPase family. EF-Tu/EF-1A subfamily. As to quaternary structure, monomer.

The protein localises to the cytoplasm. The catalysed reaction is GTP + H2O = GDP + phosphate + H(+). GTP hydrolase that promotes the GTP-dependent binding of aminoacyl-tRNA to the A-site of ribosomes during protein biosynthesis. The polypeptide is Elongation factor Tu (Streptococcus thermophilus (strain CNRZ 1066)).